The following is a 420-amino-acid chain: MAPK/MAK/MRK overlapping kinase (420 aa).

One can recognise a Protein kinase domain in the interval Y4–F285. Residues I10–V18 and K33 contribute to the ATP site. D128 acts as the Proton acceptor in catalysis. Positions P311–Q322 are enriched in polar residues. The tract at residues P311–T344 is disordered. Positions E323–A338 are enriched in basic and acidic residues.

Belongs to the protein kinase superfamily. CMGC Ser/Thr protein kinase family. CDC2/CDKX subfamily. Requires Mg(2+) as cofactor. Autophosphorylated. Highly expressed in testis, and less in kidney, brain and lung.

It localises to the cytoplasm. The protein resides in the cell projection. The protein localises to the cilium. Its subcellular location is the nucleus. It carries out the reaction L-seryl-[protein] + ATP = O-phospho-L-seryl-[protein] + ADP + H(+). The enzyme catalyses L-threonyl-[protein] + ATP = O-phospho-L-threonyl-[protein] + ADP + H(+). Phosphorylation appears to increase the enzymatic activity. Functionally, able to phosphorylate several exogenous substrates and to undergo autophosphorylation. Negatively regulates cilium length in a cAMP and mTORC1 signaling-dependent manner. In Mus musculus (Mouse), this protein is MAPK/MAK/MRK overlapping kinase (Mok).